The primary structure comprises 298 residues: Protein BZR1 homolog 1 (298 aa).

Disordered regions lie at residues 1–25 (MTSG…RRER), 71–129 (GTTY…SPSR), 153–175 (VSSS…PKIR), and 190–217 (AVSA…ESDV). The interval 10 to 91 (RTPTWKEREN…PSSAGGASVG (82 aa)) is required for DNA-binding. The span at 96–128 (SSTQLLSAPSSSFPSPVPSYHASPASSSFPSPS) shows a compositional bias: low complexity. A Phosphoserine modification is found at S156. The interval 204-224 (EHPDTIPECDESDVSTVDSGR) is PEST-like.

The protein belongs to the BZR/LAT61 family. As to quaternary structure, interacts with GF14C. Interacts with PUB24. Interacts with SMOS1. Phosphorylated on serine and threonine residues by GSK2. Dephosphorylated during response to brassinosteroid. Post-translationally, ubiquitinated by PUB24. Ubiquitination leads to its subsequent degradation by the 26S proteasome, thus reducing sensitivity to brassinosteroid signaling.

The protein localises to the nucleus. Its subcellular location is the cytoplasm. In terms of biological role, positive brassinosteroid-signaling protein. Mediates downstream brassinosteroid-regulated growth response and feedback inhibition of brassinosteroid (BR) biosynthetic genes. May act as transcriptional repressor by binding the brassinosteroid-response element (BREE) (5'-CGTG(T/C)G-3') in the promoter of DLT (AC Q9LWU9), another positive regulator of BR signaling. Acts as a transcriptional repressor of LIC, a negative regulator of BR signaling, by binding to the BRRE element of its promoter. BZR1 and LIC play opposite roles in BR signaling and regulation of leaf bending. In Oryza sativa subsp. japonica (Rice), this protein is Protein BZR1 homolog 1.